The primary structure comprises 74 residues: Invertase 3 (74 aa).

The first 19 residues, 1–19, serve as a signal peptide directing secretion; it reads MLLQAFIFLLAGFAAKISA. Asn23 carries an N-linked (GlcNAc...) asparagine glycan. Substrate-binding positions include 39–42 and Gln60; that span reads WMND. Asp42 is an active-site residue. Asn64 is a glycosylation site (N-linked (GlcNAc...) asparagine).

The protein belongs to the glycosyl hydrolase 32 family.

It catalyses the reaction Hydrolysis of terminal non-reducing beta-D-fructofuranoside residues in beta-D-fructofuranosides.. The chain is Invertase 3 (SUC3) from Saccharomyces cerevisiae (Baker's yeast).